Consider the following 354-residue polypeptide: Protein NDH-DEPENDENT CYCLIC ELECTRON FLOW 5 (354 aa).

Residues 1-49 (MALVHYMNVSRSTFPLSRSSKINLSSSFASLPLQFHKNIKRLESSVPPS) constitute a chloroplast transit peptide.

It localises to the plastid. Its subcellular location is the chloroplast thylakoid membrane. In terms of biological role, required for both formation and activity of the chloroplast NAD(P)H dehydrogenase (NDH) complex of the photosynthetic electron transport chain. May function in assembly or stabilization of the NDH complex. In Arabidopsis thaliana (Mouse-ear cress), this protein is Protein NDH-DEPENDENT CYCLIC ELECTRON FLOW 5.